An 87-amino-acid chain; its full sequence is Small ribosomal subunit protein uS15c (87 aa).

The protein belongs to the universal ribosomal protein uS15 family. Part of the 30S ribosomal subunit.

The protein resides in the plastid. It localises to the chloroplast. The polypeptide is Small ribosomal subunit protein uS15c (rps15) (Oenothera biennis (German evening primrose)).